Consider the following 311-residue polypeptide: Dehydrogenase/reductase SDR family member 7C (311 aa).

An N-terminal signal peptide occupies residues 1 to 18; that stretch reads MGFLTFLIVPLLILGISG. NAD(+) is bound at residue 41–65; it reads VITDAISGLGKECSRVFHSAGARLV. Thr-178 contributes to the substrate binding site. Catalysis depends on Tyr-191, which acts as the Proton acceptor.

Belongs to the short-chain dehydrogenases/reductases (SDR) family.

The protein localises to the secreted. Functionally, putative oxidoreductase. In Xenopus tropicalis (Western clawed frog), this protein is Dehydrogenase/reductase SDR family member 7C (dhrs7c).